Here is a 688-residue protein sequence, read N- to C-terminus: Glycine--tRNA ligase beta subunit (688 aa).

This sequence belongs to the class-II aminoacyl-tRNA synthetase family. In terms of assembly, tetramer of two alpha and two beta subunits.

The protein resides in the cytoplasm. It catalyses the reaction tRNA(Gly) + glycine + ATP = glycyl-tRNA(Gly) + AMP + diphosphate. This chain is Glycine--tRNA ligase beta subunit, found in Colwellia psychrerythraea (strain 34H / ATCC BAA-681) (Vibrio psychroerythus).